A 239-amino-acid chain; its full sequence is Norbelladine 4'-O-methyltransferase 3 (239 aa).

S-adenosyl-L-methionine is bound by residues Val55, Glu77, 79-80 (GV), Ser85, Asp103, and Ala132. Asp155 contributes to the a divalent metal cation binding site. Asp157 provides a ligand contact to S-adenosyl-L-methionine. Asp181 and Asn182 together coordinate a divalent metal cation.

It belongs to the class I-like SAM-binding methyltransferase superfamily. Cation-dependent O-methyltransferase family. The cofactor is Mg(2+).

It carries out the reaction norbelladine + S-adenosyl-L-methionine = 4'-O-methylnorbelladine + S-adenosyl-L-homocysteine + H(+). The protein operates within alkaloid biosynthesis. Functionally, 4'-O-methyltransferase converting norbelladine to 4'-O-methylnorbelladine. 4'-O-methylnorbelladine is a precursor to all Amaryllidaceae alkaloids such as galanthamine, lycorine and haemanthamine, and including haemanthamine- and crinamine-type alkaloids, promising anticancer agents. The protein is Norbelladine 4'-O-methyltransferase 3 of Narcissus aff. pseudonarcissus MK-2014 (Daffodil).